We begin with the raw amino-acid sequence, 729 residues long: Golgin subfamily A member 5 (729 aa).

Position 2 is an N-acetylserine (Ser2). At 2–696 (SWFADLAGRA…IFLRRYPIAR (695 aa)) the chain is on the cytoplasmic side. 2 positions are modified to dimethylated arginine: Arg27 and Arg89. Disordered stretches follow at residues 89–222 (RTVG…SQEL) and 626–645 (SASS…VDSG). At Ser116 the chain carries Phosphoserine. Residues 134–146 (PTGRVEVKKEKGR) are compositionally biased toward basic and acidic residues. Over residues 148–167 (PVSPSSPSGVSSVNTSVTTT) the composition is skewed to low complexity. Polar residues-rich tracts occupy residues 175 to 186 (GSQSPGVNSSDS) and 626 to 638 (SASS…SAIN). Residues 215–629 (GSSRSQELSN…LEQQVHSASS (415 aa)) are a coiled coil. Residues 697-717 (VFVIIYMALLHLWVMIVLLTY) traverse the membrane as a helical; Anchor for type IV membrane protein segment. Topologically, residues 718 to 729 (SPEMHHDQPYGK) are lumenal.

As to quaternary structure, homodimer. Interacts with RAB1A that has been activated by GTP-binding. Interacts with isoform CASP of CUX1. Highly phosphorylated during mitosis. Phosphorylation is barely detectable during interphase.

It is found in the golgi apparatus membrane. In terms of biological role, involved in maintaining Golgi structure. Stimulates the formation of Golgi stacks and ribbons. Involved in intra-Golgi retrograde transport. In Mus musculus (Mouse), this protein is Golgin subfamily A member 5 (Golga5).